We begin with the raw amino-acid sequence, 47 residues long: MAPLTLDLLAQLPEAYQLYAPTVDVLPLIPLLFFLLVFVWQAAVGFR.

Positions 1-10 are excised as a propeptide; the sequence is MAPLTLDLLA. A helical transmembrane segment spans residues 26-46; it reads LPLIPLLFFLLVFVWQAAVGF.

The protein belongs to the PsbK family. PSII is composed of 1 copy each of membrane proteins PsbA, PsbB, PsbC, PsbD, PsbE, PsbF, PsbH, PsbI, PsbJ, PsbK, PsbL, PsbM, PsbT, PsbX, PsbY, Psb30/Ycf12, peripheral proteins PsbO, CyanoQ (PsbQ), PsbU, PsbV and a large number of cofactors. It forms dimeric complexes.

The protein localises to the cellular thylakoid membrane. One of the components of the core complex of photosystem II (PSII). PSII is a light-driven water:plastoquinone oxidoreductase that uses light energy to abstract electrons from H(2)O, generating O(2) and a proton gradient subsequently used for ATP formation. It consists of a core antenna complex that captures photons, and an electron transfer chain that converts photonic excitation into a charge separation. In Prochlorococcus marinus (strain SARG / CCMP1375 / SS120), this protein is Photosystem II reaction center protein K.